Reading from the N-terminus, the 459-residue chain is Vicilin (459 aa).

Positions 1-28 (MAATTMKASFPLLMLMGISFLASVCVSS) are cleaved as a signal peptide. The region spanning 36–194 (FIFKSNKFQT…SFNTDYEEIE (159 aa)) is the Cupin type-1 1 domain. 3 disordered regions span residues 235–258 (LSKNAKSTSKKSVSSESEPFNLRS), 321–346 (ELVGQRNENQQEQRKEDDEEEEQGEE), and 430–459 (ENQKQSHFADAQPQQRERGSRETRDRLSSV). The segment covering 238-251 (NAKSTSKKSVSSES) has biased composition (low complexity). Positions 254–426 (FNLRSRGPIY…AFPGSAQEVD (173 aa)) constitute a Cupin type-1 2 domain. The segment covering 337–346 (DDEEEEQGEE) has biased composition (acidic residues). A compositionally biased stretch (basic and acidic residues) spans 444–459 (QRERGSRETRDRLSSV).

This sequence belongs to the 7S seed storage protein family.

It localises to the vacuole. It is found in the aleurone grain. Seed storage protein. The chain is Vicilin from Pisum sativum (Garden pea).